A 68-amino-acid polypeptide reads, in one-letter code: Erythrodihydroneopterin triphosphate synthetase (68 aa).

At Ser66 the chain carries Phosphoserine.

The sequence is that of Erythrodihydroneopterin triphosphate synthetase from Cavia porcellus (Guinea pig).